Consider the following 537-residue polypeptide: MNSWWTYVNRWIFSTNAKDIAILYLLFGLVSGIIGSVFSFIIRMELSAPGSQFLSGNGQLYNVAISAHGILMIFFFIIPALFGAFGNYLVPLMIGAPDVAYPRVNNFTFWLLPPALMLLLISALTEEGPGGGWTVYPPLSSITSHSGPAIDLAILSLQLTGISSTLGSVNLIATMINMRAPGLSLYQMPLFAWAIMITSILLLLTLPVLAGGLFMLFSDRNLNTSFYAPEGGGDPVLYQHLFWFFGHPEVYILIMPAFGVVSHIIPSLAHKPIFGKEGMLWAMLSIALLGLMVWSHHLFTVGLDVDTRAYFSAATMVIAIPTGIKIFSWLATLTGGAIQWSRVPMLYAIGFLILFTIGGLTGVILSNSVLDIAFHDTYFVVAHFHYVLSMGALFGLCGAYYWSPKMFGLMYNETLASIQFWILFIGVNIVFGPQHFLGLNGMPRRIPDYPEAFVGWNFVSSIGSVISILSLFLFMYVMYDQFTSNRVVKTNPYLIPSYFDDNVIFVNEKLGVAQSIEWLLHSPVHEHAFNTLPTKSI.

The chain crosses the membrane as a helical span at residues 22 to 42 (ILYLLFGLVSGIIGSVFSFII). Positions 45, 48, and 50 each coordinate Ca(2+). His68 is a binding site for Fe(II)-heme a. A run of 8 helical transmembrane segments spans residues 70–90 (ILMIFFFIIPALFGAFGNYLV), 104–124 (VNNFTFWLLPPALMLLLISAL), 152–172 (LAILSLQLTGISSTLGSVNLI), 190–210 (LFAWAIMITSILLLLTLPVLA), 241–261 (LFWFFGHPEVYILIMPAFGVV), 279–299 (MLWAMLSIALLGLMVWSHHLF), 318–338 (IAIPTGIKIFSWLATLTGGAI), and 345–365 (MLYAIGFLILFTIGGLTGVIL). A Cu cation-binding site is contributed by His247. The segment at residues 247–251 (HPEVY) is a cross-link (1'-histidyl-3'-tyrosine (His-Tyr)). Tyr251 lines the O2 pocket. Cu cation is bound by residues His296 and His297. Mg(2+)-binding residues include His375 and Asp376. 2 helical membrane passes run 379 to 399 (FVVAHFHYVLSMGALFGLCGA) and 418 to 438 (IQFWILFIGVNIVFGPQHFLG). His383 is a heme a3 binding site. His385 serves as a coordination point for Fe(II)-heme a. Pro447 provides a ligand contact to Ca(2+). Residues 458-478 (FVSSIGSVISILSLFLFMYVM) form a helical membrane-spanning segment.

The protein belongs to the heme-copper respiratory oxidase family. In terms of assembly, component of the cytochrome c oxidase (complex IV, CIV), a multisubunit enzyme composed of a catalytic core of 3 subunits and several supernumerary subunits. The complex exists as a monomer or a dimer and forms supercomplexes (SCs) in the inner mitochondrial membrane with ubiquinol-cytochrome c oxidoreductase (cytochrome b-c1 complex, complex III, CIII). The cofactor is heme. Requires Cu cation as cofactor.

The protein resides in the mitochondrion inner membrane. It carries out the reaction 4 Fe(II)-[cytochrome c] + O2 + 8 H(+)(in) = 4 Fe(III)-[cytochrome c] + 2 H2O + 4 H(+)(out). It functions in the pathway energy metabolism; oxidative phosphorylation. Its function is as follows. Component of the cytochrome c oxidase, the last enzyme in the mitochondrial electron transport chain which drives oxidative phosphorylation. The respiratory chain contains 3 multisubunit complexes succinate dehydrogenase (complex II, CII), ubiquinol-cytochrome c oxidoreductase (cytochrome b-c1 complex, complex III, CIII) and cytochrome c oxidase (complex IV, CIV), that cooperate to transfer electrons derived from NADH and succinate to molecular oxygen, creating an electrochemical gradient over the inner membrane that drives transmembrane transport and the ATP synthase. Cytochrome c oxidase is the component of the respiratory chain that catalyzes the reduction of oxygen to water. Electrons originating from reduced cytochrome c in the intermembrane space (IMS) are transferred via the dinuclear copper A center (CU(A)) of subunit 2 and heme A of subunit 1 to the active site in subunit 1, a binuclear center (BNC) formed by heme A3 and copper B (CU(B)). The BNC reduces molecular oxygen to 2 water molecules using 4 electrons from cytochrome c in the IMS and 4 protons from the mitochondrial matrix. The sequence is that of Cytochrome c oxidase subunit 1 (cox1) from Schizosaccharomyces pombe (strain 972 / ATCC 24843) (Fission yeast).